Consider the following 216-residue polypeptide: UPF0502 protein VPA1223 (216 aa).

This sequence belongs to the UPF0502 family.

The polypeptide is UPF0502 protein VPA1223 (Vibrio parahaemolyticus serotype O3:K6 (strain RIMD 2210633)).